Consider the following 556-residue polypeptide: Oxygen-dependent choline dehydrogenase (556 aa).

6–35 (DYIIIGAGSAGNVLAARLTEDPGVTVLLLE) contributes to the FAD binding site. His-475 acts as the Proton acceptor in catalysis.

The protein belongs to the GMC oxidoreductase family. Requires FAD as cofactor.

The enzyme catalyses choline + A = betaine aldehyde + AH2. It carries out the reaction betaine aldehyde + NAD(+) + H2O = glycine betaine + NADH + 2 H(+). It participates in amine and polyamine biosynthesis; betaine biosynthesis via choline pathway; betaine aldehyde from choline (cytochrome c reductase route): step 1/1. Functionally, involved in the biosynthesis of the osmoprotectant glycine betaine. Catalyzes the oxidation of choline to betaine aldehyde and betaine aldehyde to glycine betaine at the same rate. The sequence is that of Oxygen-dependent choline dehydrogenase from Xanthomonas euvesicatoria pv. vesicatoria (strain 85-10) (Xanthomonas campestris pv. vesicatoria).